A 466-amino-acid chain; its full sequence is Ribulose bisphosphate carboxylase (466 aa).

N111 provides a ligand contact to substrate. K166 (proton acceptor) is an active-site residue. A substrate-binding site is contributed by K168. Mg(2+)-binding residues include K191, D193, and E194. K191 carries the N6-carboxylysine modification. Catalysis depends on H287, which acts as the Proton acceptor. The substrate site is built by R288, H321, and S368.

This sequence belongs to the RuBisCO large chain family. Type II subfamily. As to quaternary structure, homodimer. Mg(2+) serves as cofactor.

It catalyses the reaction 2 (2R)-3-phosphoglycerate + 2 H(+) = D-ribulose 1,5-bisphosphate + CO2 + H2O. The catalysed reaction is D-ribulose 1,5-bisphosphate + O2 = 2-phosphoglycolate + (2R)-3-phosphoglycerate + 2 H(+). Functionally, ruBisCO catalyzes two reactions: the carboxylation of D-ribulose 1,5-bisphosphate, the primary event in carbon dioxide fixation, as well as the oxidative fragmentation of the pentose substrate. Both reactions occur simultaneously and in competition at the same active site. In Rhodospirillum rubrum, this protein is Ribulose bisphosphate carboxylase (cbbM).